Reading from the N-terminus, the 382-residue chain is D-galactonate dehydratase (382 aa).

Mg(2+) is bound at residue Asp183. Catalysis depends on His185, which acts as the Proton donor. Mg(2+)-binding residues include Glu209 and Glu235. Catalysis depends on His285, which acts as the Proton acceptor.

The protein belongs to the mandelate racemase/muconate lactonizing enzyme family. GalD subfamily. The cofactor is Mg(2+).

The enzyme catalyses D-galactonate = 2-dehydro-3-deoxy-D-galactonate + H2O. It participates in carbohydrate acid metabolism; D-galactonate degradation; D-glyceraldehyde 3-phosphate and pyruvate from D-galactonate: step 1/3. Functionally, catalyzes the dehydration of D-galactonate to 2-keto-3-deoxy-D-galactonate. The sequence is that of D-galactonate dehydratase from Verminephrobacter eiseniae (strain EF01-2).